Reading from the N-terminus, the 252-residue chain is MERLLIVNADDFGLSKGQNYGIIEACRNGIVTSTTALVNGQAIDHAVQLSRDEPSLAIGMHFVLTMGKPLTVMPGLTRDGVLGKWIWQLAEEDALPLEEITQELASQYLRFIELFGRKPTHLDSHHHVHMFPQIFPIVAKFAAEEGIALRIDRQPLSNDGDLPANLRSSQGFSSAFYGEEISETLFLQVLDDSSHRGERSLEVMCHPAFVDNTIRQSAYCFPRLTELDVLTSASLKYAIAERGYLLGSYHDV.

His-61 and His-125 together coordinate Mg(2+).

It belongs to the YdjC deacetylase family. ChbG subfamily. As to quaternary structure, homodimer. Mg(2+) is required as a cofactor.

The protein localises to the cytoplasm. The catalysed reaction is N,N'-diacetylchitobiose + H2O = N-acetyl-beta-D-glucosaminyl-(1-&gt;4)-D-glucosamine + acetate. It carries out the reaction diacetylchitobiose-6'-phosphate + H2O = N'-monoacetylchitobiose-6'-phosphate + acetate. Its pathway is glycan degradation; chitin degradation. Its function is as follows. Involved in the degradation of chitin. ChbG is essential for growth on the acetylated chitooligosaccharides chitobiose and chitotriose but is dispensable for growth on cellobiose and chitosan dimer, the deacetylated form of chitobiose. Deacetylation of chitobiose-6-P and chitotriose-6-P is necessary for both the activation of the chb promoter by the regulatory protein ChbR and the hydrolysis of phosphorylated beta-glucosides by the phospho-beta-glucosidase ChbF. Catalyzes the removal of only one acetyl group from chitobiose-6-P to yield monoacetylchitobiose-6-P, the inducer of ChbR and the substrate of ChbF. The protein is Chitooligosaccharide deacetylase of Escherichia coli O127:H6 (strain E2348/69 / EPEC).